The chain runs to 145 residues: 3-dehydroquinate dehydratase (145 aa).

Residue Tyr24 is the Proton acceptor of the active site. The substrate site is built by Asn75, His81, and Asp88. His101 functions as the Proton donor in the catalytic mechanism. Substrate contacts are provided by residues 102 to 103 (LS) and Arg112.

This sequence belongs to the type-II 3-dehydroquinase family. Homododecamer.

The enzyme catalyses 3-dehydroquinate = 3-dehydroshikimate + H2O. The protein operates within metabolic intermediate biosynthesis; chorismate biosynthesis; chorismate from D-erythrose 4-phosphate and phosphoenolpyruvate: step 3/7. Functionally, catalyzes a trans-dehydration via an enolate intermediate. The protein is 3-dehydroquinate dehydratase of Phenylobacterium zucineum (strain HLK1).